Consider the following 114-residue polypeptide: UPF0342 protein lp_1415 (114 aa).

Belongs to the UPF0342 family.

This is UPF0342 protein lp_1415 from Lactiplantibacillus plantarum (strain ATCC BAA-793 / NCIMB 8826 / WCFS1) (Lactobacillus plantarum).